A 458-amino-acid polypeptide reads, in one-letter code: Cell division protein FtsZ (458 aa).

Residues 22–26, 109–111, E140, R144, and D188 contribute to the GTP site; these read GAGGN and GTG. Positions 319–458 are disordered; sequence KAEEEASKQP…IPFFKHRRQD (140 aa). The segment covering 368–379 has biased composition (polar residues); that stretch reads NTISHEAPTQSI. Basic and acidic residues predominate over residues 401–418; sequence KQDRKENNRPQPVENKEK. Residues 425–439 show a composition bias toward low complexity; sequence SFSSDDSTSISQIET.

It belongs to the FtsZ family. In terms of assembly, homodimer. Polymerizes to form a dynamic ring structure in a strictly GTP-dependent manner. Interacts directly with several other division proteins.

It localises to the cytoplasm. In terms of biological role, essential cell division protein that forms a contractile ring structure (Z ring) at the future cell division site. The regulation of the ring assembly controls the timing and the location of cell division. One of the functions of the FtsZ ring is to recruit other cell division proteins to the septum to produce a new cell wall between the dividing cells. Binds GTP and shows GTPase activity. The chain is Cell division protein FtsZ from Lactobacillus johnsonii (strain CNCM I-12250 / La1 / NCC 533).